Reading from the N-terminus, the 284-residue chain is Bifunctional protein FolD (284 aa).

Residues 165–167 (GRS), Ser190, and Ile231 contribute to the NADP(+) site.

The protein belongs to the tetrahydrofolate dehydrogenase/cyclohydrolase family. In terms of assembly, homodimer.

It catalyses the reaction (6R)-5,10-methylene-5,6,7,8-tetrahydrofolate + NADP(+) = (6R)-5,10-methenyltetrahydrofolate + NADPH. The catalysed reaction is (6R)-5,10-methenyltetrahydrofolate + H2O = (6R)-10-formyltetrahydrofolate + H(+). The protein operates within one-carbon metabolism; tetrahydrofolate interconversion. Functionally, catalyzes the oxidation of 5,10-methylenetetrahydrofolate to 5,10-methenyltetrahydrofolate and then the hydrolysis of 5,10-methenyltetrahydrofolate to 10-formyltetrahydrofolate. The chain is Bifunctional protein FolD from Clostridium kluyveri (strain ATCC 8527 / DSM 555 / NBRC 12016 / NCIMB 10680 / K1).